Reading from the N-terminus, the 277-residue chain is Type II restriction enzyme RsrI (277 aa).

It belongs to the EcoRI type II restriction endonuclease family. Homodimer. The cofactor is Mg(2+).

The enzyme catalyses Endonucleolytic cleavage of DNA to give specific double-stranded fragments with terminal 5'-phosphates.. Its function is as follows. A P subtype restriction enzyme that recognizes the double-stranded sequence 5'-GAATTC-3' and cleaves after G-1. This is Type II restriction enzyme RsrI (rsrIR) from Cereibacter sphaeroides (Rhodobacter sphaeroides).